We begin with the raw amino-acid sequence, 289 residues long: Splicing factor C9orf78 homolog (289 aa).

Disordered regions lie at residues 1–30 (MRIT…VRLK) and 85–111 (RGKD…RRDE). The segment at 5-58 (GKTFRRRRADSESEEDEQESEEVRLKLEETREVQNLRKRPNGVSAAALLVGEKV) is interaction with SNRNP200. A phosphoserine mark is found at Ser15 and Ser17. A Phosphotyrosine modification is found at Tyr147. The span at 232-283 (LNAPIRRNKEEPKARPLRVGDTEKPEPERSPPNRKRPANEKATDDYHYEKFK) shows a compositional bias: basic and acidic residues. Residues 232–289 (LNAPIRRNKEEPKARPLRVGDTEKPEPERSPPNRKRPANEKATDDYHYEKFKKMNRRY) are disordered. Residue Thr253 is modified to Phosphothreonine. At Ser261 the chain carries Phosphoserine.

Belongs to the TLS1 family. As to quaternary structure, component of the spliceosome. Interacts with SNRNP200; the interaction is direct. Interacts with PRPF8.

It is found in the nucleus. Its subcellular location is the chromosome. The protein localises to the centromere. Its function is as follows. Plays a role in pre-mRNA splicing by promoting usage of the upstream 3'-splice site at alternative NAGNAG splice sites; these are sites featuring alternative acceptor motifs separated by only a few nucleotides. May also modulate exon inclusion events. PPlays a role in spliceosomal remodeling by displacing WBP4 from SNRNP200 and may act to inhibit SNRNP200 helicase activity. Binds U5 snRNA. Required for proper chromosome segregation. Not required for splicing of shelterin components. This Mus musculus (Mouse) protein is Splicing factor C9orf78 homolog.